Reading from the N-terminus, the 172-residue chain is Putative phosphoesterase BAMEG_3349 (172 aa).

His34 functions as the Proton donor in the catalytic mechanism. Short sequence motifs (HXTX) lie at residues 34–37 (HITL) and 115–118 (HLTI). Catalysis depends on His115, which acts as the Proton acceptor.

Belongs to the 2H phosphoesterase superfamily. YjcG family.

The polypeptide is Putative phosphoesterase BAMEG_3349 (Bacillus anthracis (strain CDC 684 / NRRL 3495)).